The primary structure comprises 1048 residues: Putative cation efflux system protein SilA (1048 aa).

14 consecutive transmembrane segments (helical) span residues 14–34, 125–145, 338–358, 363–383, 391–411, 446–466, 485–505, 539–559, 737–757, 871–891, 897–917, 928–948, 985–1005, and 1012–1032; these read FLVMMGALFLSIWGTWTIINT, VSSEIGPDATGVGWIFEYALV, LSSKLLEEFFVVAIVCALFLW, ALVAIISLPLGLCIAFIVMHF, MSLGGIAIAVGAMVDAAIVMI, VGPALFISLLIITLSFIPIFT, SMAGAAALAIIVIPILMGFWI, TLLVAALSIFTVVWPLSQVGG, GMTVGDVQLFVSSAIGGAMVG, KLKLMVPMTVMIIFILLYLAF, ALLILMSLPFALVGGIWFLYW, TGFIALAGVAAEFGVVMLMYL, AMTVAVIIAGLLPILWGTGAG, and IAAPMIGGMITAPLLSLFIIP.

The protein belongs to the resistance-nodulation-cell division (RND) (TC 2.A.6) family.

It localises to the cell inner membrane. Its function is as follows. Component of the sil cation-efflux system that confers resistance to silver. May be part of a three-component cation/proton antiporter. The sequence is that of Putative cation efflux system protein SilA (silA) from Salmonella typhimurium.